The chain runs to 230 residues: Pyridoxine/pyridoxamine 5'-phosphate oxidase (230 aa).

Substrate-binding positions include 21 to 24 (RVEY) and Lys87. FMN is bound by residues 82–87 (RSVLCK), 97–98 (YT), Lys104, and Gln126. The substrate site is built by Tyr144, Arg148, and Ser152. Residues 161-162 (QS) and Trp207 contribute to the FMN site. Substrate is bound at residue 213-215 (RVH). Arg217 is a binding site for FMN.

It belongs to the pyridoxamine 5'-phosphate oxidase family. In terms of assembly, homodimer. The cofactor is FMN.

It carries out the reaction pyridoxamine 5'-phosphate + O2 + H2O = pyridoxal 5'-phosphate + H2O2 + NH4(+). The catalysed reaction is pyridoxine 5'-phosphate + O2 = pyridoxal 5'-phosphate + H2O2. The protein operates within cofactor metabolism; pyridoxal 5'-phosphate salvage; pyridoxal 5'-phosphate from pyridoxamine 5'-phosphate: step 1/1. Its pathway is cofactor metabolism; pyridoxal 5'-phosphate salvage; pyridoxal 5'-phosphate from pyridoxine 5'-phosphate: step 1/1. Catalyzes the oxidation of either pyridoxine 5'-phosphate (PNP) or pyridoxamine 5'-phosphate (PMP) into pyridoxal 5'-phosphate (PLP). The sequence is that of Pyridoxine/pyridoxamine 5'-phosphate oxidase from Mycolicibacterium smegmatis (strain ATCC 700084 / mc(2)155) (Mycobacterium smegmatis).